A 143-amino-acid polypeptide reads, in one-letter code: Large-conductance mechanosensitive channel (143 aa).

2 consecutive transmembrane segments (helical) span residues Val19 to Ile39 and Gly81 to Val101.

It belongs to the MscL family. Homopentamer.

The protein resides in the cell inner membrane. In terms of biological role, channel that opens in response to stretch forces in the membrane lipid bilayer. May participate in the regulation of osmotic pressure changes within the cell. The sequence is that of Large-conductance mechanosensitive channel from Rhodopseudomonas palustris (strain HaA2).